A 382-amino-acid chain; its full sequence is Mannitol-1-phosphate 5-dehydrogenase (382 aa).

NAD(+) is bound at residue 3–14 (ALHFGAGNIGRG). Position 269 is an N6-acetyllysine (Lys269).

The protein belongs to the mannitol dehydrogenase family.

It catalyses the reaction D-mannitol 1-phosphate + NAD(+) = beta-D-fructose 6-phosphate + NADH + H(+). The sequence is that of Mannitol-1-phosphate 5-dehydrogenase from Shigella sonnei (strain Ss046).